Here is a 211-residue protein sequence, read N- to C-terminus: MTSQRTRARMVERLCTQGVTDEAVLTAMITVPRHIFVEEVLASRAYDDVALPINFEQTISNPFTVARMSQLLRAGSNPGKVLEIGTGSGYQTAILAQFSREVYSVERIGPLLTRTRGRLRELRINNVRLKHADGLLGLSEAAPFDGIILTAATPHMPPALLEQLAIRGRMVFPRGTSEQVLCVIERNLQGYTETILDEVKFVPMIPGIWQR.

The active site involves Ser-60.

Belongs to the methyltransferase superfamily. L-isoaspartyl/D-aspartyl protein methyltransferase family.

The protein resides in the cytoplasm. It carries out the reaction [protein]-L-isoaspartate + S-adenosyl-L-methionine = [protein]-L-isoaspartate alpha-methyl ester + S-adenosyl-L-homocysteine. Its function is as follows. Catalyzes the methyl esterification of L-isoaspartyl residues in peptides and proteins that result from spontaneous decomposition of normal L-aspartyl and L-asparaginyl residues. It plays a role in the repair and/or degradation of damaged proteins. The chain is Protein-L-isoaspartate O-methyltransferase 2 from Nitrosospira multiformis (strain ATCC 25196 / NCIMB 11849 / C 71).